The following is a 497-amino-acid chain: Probable cytosol aminopeptidase (497 aa).

Residues K267 and D272 each coordinate Mn(2+). The active site involves K279. D290, D349, and E351 together coordinate Mn(2+). R353 is a catalytic residue.

The protein belongs to the peptidase M17 family. Mn(2+) is required as a cofactor.

It localises to the cytoplasm. It catalyses the reaction Release of an N-terminal amino acid, Xaa-|-Yaa-, in which Xaa is preferably Leu, but may be other amino acids including Pro although not Arg or Lys, and Yaa may be Pro. Amino acid amides and methyl esters are also readily hydrolyzed, but rates on arylamides are exceedingly low.. It carries out the reaction Release of an N-terminal amino acid, preferentially leucine, but not glutamic or aspartic acids.. Presumably involved in the processing and regular turnover of intracellular proteins. Catalyzes the removal of unsubstituted N-terminal amino acids from various peptides. The polypeptide is Probable cytosol aminopeptidase (Nitrosomonas eutropha (strain DSM 101675 / C91 / Nm57)).